The following is a 70-amino-acid chain: SPbeta prophage-derived uncharacterized protein YotJ (70 aa).

The sequence is that of SPbeta prophage-derived uncharacterized protein YotJ (yotJ) from Bacillus subtilis (strain 168).